Here is a 385-residue protein sequence, read N- to C-terminus: 1-deoxy-D-xylulose 5-phosphate reductoisomerase (385 aa).

6 residues coordinate NADPH: threonine 13, glycine 14, serine 15, isoleucine 16, asparagine 40, and asparagine 122. A 1-deoxy-D-xylulose 5-phosphate-binding site is contributed by lysine 123. Glutamate 124 provides a ligand contact to NADPH. Position 148 (aspartate 148) interacts with Mn(2+). Residues serine 149, glutamate 150, serine 177, and histidine 200 each contribute to the 1-deoxy-D-xylulose 5-phosphate site. Glutamate 150 lines the Mn(2+) pocket. NADPH is bound at residue glycine 206. Residues serine 213, asparagine 218, lysine 219, and glutamate 222 each contribute to the 1-deoxy-D-xylulose 5-phosphate site. Glutamate 222 contributes to the Mn(2+) binding site.

This sequence belongs to the DXR family. Mg(2+) is required as a cofactor. Mn(2+) serves as cofactor.

The enzyme catalyses 2-C-methyl-D-erythritol 4-phosphate + NADP(+) = 1-deoxy-D-xylulose 5-phosphate + NADPH + H(+). The protein operates within isoprenoid biosynthesis; isopentenyl diphosphate biosynthesis via DXP pathway; isopentenyl diphosphate from 1-deoxy-D-xylulose 5-phosphate: step 1/6. In terms of biological role, catalyzes the NADPH-dependent rearrangement and reduction of 1-deoxy-D-xylulose-5-phosphate (DXP) to 2-C-methyl-D-erythritol 4-phosphate (MEP). The sequence is that of 1-deoxy-D-xylulose 5-phosphate reductoisomerase from Francisella tularensis subsp. holarctica (strain FTNF002-00 / FTA).